A 37-amino-acid polypeptide reads, in one-letter code: Cytochrome b6-f complex subunit 5 (37 aa).

A helical transmembrane segment spans residues 5–25; sequence LLSGIVLGMITVSAFGLFVAA.

Belongs to the PetG family. The 4 large subunits of the cytochrome b6-f complex are cytochrome b6, subunit IV (17 kDa polypeptide, PetD), cytochrome f and the Rieske protein, while the 4 small subunits are PetG, PetL, PetM and PetN. The complex functions as a dimer.

The protein localises to the plastid. Its subcellular location is the chloroplast thylakoid membrane. Its function is as follows. Component of the cytochrome b6-f complex, which mediates electron transfer between photosystem II (PSII) and photosystem I (PSI), cyclic electron flow around PSI, and state transitions. PetG is required for either the stability or assembly of the cytochrome b6-f complex. In Thalassiosira pseudonana (Marine diatom), this protein is Cytochrome b6-f complex subunit 5.